A 138-amino-acid chain; its full sequence is Basic phospholipase A2 BP-II (138 aa).

A signal peptide spans 1-16 (MRTLWIMAVLLVGVDG). 7 cysteine pairs are disulfide-bonded: Cys42–Cys132, Cys44–Cys60, Cys59–Cys112, Cys65–Cys138, Cys66–Cys105, Cys73–Cys98, and Cys91–Cys103. Positions 45 and 47 each coordinate Ca(2+). Residue His63 is part of the active site. The active site involves Asp106.

Belongs to the phospholipase A2 family. Group II subfamily. K49 sub-subfamily. As to quaternary structure, exists as a monomer in both solution and crystal states. In the presence of SDS or probably in the presence of phospholipids, assembles to form SDS-resistant stable oligomers. Requires Ca(2+) as cofactor. In terms of tissue distribution, expressed by the venom gland.

It is found in the secreted. The catalysed reaction is a 1,2-diacyl-sn-glycero-3-phosphocholine + H2O = a 1-acyl-sn-glycero-3-phosphocholine + a fatty acid + H(+). Snake venom phospholipase A2 (PLA2) that shows anticoagulant activities, strong myolytic activity, infiltration of polymorphonuclear cells, and edema in stromal tissues. Induces cell death of Jurkat cells in a concentration-dependent manner. Shows a low phospholipase A2 activity. PLA2 catalyzes the calcium-dependent hydrolysis of the 2-acyl groups in 3-sn-phosphoglycerides. The polypeptide is Basic phospholipase A2 BP-II (Protobothrops flavoviridis (Habu)).